The chain runs to 429 residues: MPAIVLIGAQWGDEGKGKATDLLGGRLQWVVRYQGGNNAGHTVVLPNGDKFALHLIPSGILTPGVTNVIGNGVVVDPGVLLTELAGLDERGVDTSRLLLSADAHLIMPYHVAIDKVTERFLGAKKIGTTGRGIGPCYQDKLARVGVRVQDVLDEKILTQKVEAALEFKNQVLVKIYNRKALDPQQVVDEVLEQADGFKHRIADTRLQLNEALERGETVLLEGSQGTLLDVDHGTYPYVTSSNPTSGGAAVGSGIGPTKITTVLGILKAYTTRVGSGPFPTELFDQNGEYLAKTGGEVGVTTGRARRTGWFDAVIARYATRVNGITDYFLTKLDVLSSLDTIPICVGYDVDGVRYDEMPMSQTDVHHAKPIYEEMPGWWEDISHARTFEELPKNAQNYVLRLEELSGAYISCIGVGPGRDETIVRRDVVR.

GTP contacts are provided by residues 12-18 and 40-42; these read GDEGKGK and GHT. Asp-13 serves as the catalytic Proton acceptor. Mg(2+) contacts are provided by Asp-13 and Gly-40. IMP-binding positions include 13-16, 38-41, Thr-129, Arg-143, Gln-224, Thr-239, and Arg-303; these read DEGK and NAGH. Catalysis depends on His-41, which acts as the Proton donor. 299-305 provides a ligand contact to substrate; sequence VTTGRAR. Residues Arg-305, 331–333, and 413–415 contribute to the GTP site; these read KLD and GVG.

Belongs to the adenylosuccinate synthetase family. Homodimer. Mg(2+) serves as cofactor.

Its subcellular location is the cytoplasm. It catalyses the reaction IMP + L-aspartate + GTP = N(6)-(1,2-dicarboxyethyl)-AMP + GDP + phosphate + 2 H(+). The protein operates within purine metabolism; AMP biosynthesis via de novo pathway; AMP from IMP: step 1/2. Functionally, plays an important role in the de novo pathway of purine nucleotide biosynthesis. Catalyzes the first committed step in the biosynthesis of AMP from IMP. The sequence is that of Adenylosuccinate synthetase from Rhodococcus jostii (strain RHA1).